The sequence spans 505 residues: MARRSSRVSWLAFEGWESRDLPRVSPRLFGAWHPAPAAARMPTRWAPGTQCMTKCENSRPKPGELAFRKGDMVTILEACEDKSWYRAKHHGSGQEGLLAAAALRHGEALSTDPKLSLMPWFHGKISGQEAIQQLQPPEDGLFLVRESARHPGDYVLCVSFGRDVIHYRVLHRDGHLTIDEAVCFCNLMDMVEHYTKDKGAICTKLVKPRRKQGAKSAEEELAKAGWLLDLQHLTLGAQIGEGEFGAVLQGEYLGQKVAVKNIKCDVTAQAFLDETAVMTKLQHRNLVRLLGVILHHGLYIVMEHVSKGNLVNFLRTRGRALVSTSQLLQFALHVAEGMEYLESKKLVHRDLAARNILVSEDLVAKVSDFGLAKAERKGLDSSRLPVKWTAPEALKNGRFSSKSDVWSFGVLLWEVFSYGRAPYPKMSLKEVSEAVEKGYRMEPPDGCPGSVHTLMGSCWEAEPARRPPFRKIVEKLGRELRSVGVSAPAGGQEAEGSAPTRSQDP.

Residues 46–108 form the SH3 domain; that stretch reads APGTQCMTKC…AAAALRHGEA (63 aa). Positions 120 to 209 constitute an SH2 domain; that stretch reads WFHGKISGQE…AICTKLVKPR (90 aa). Residues 233–481 enclose the Protein kinase domain; the sequence is LTLGAQIGEG…IVEKLGRELR (249 aa). Residues 239-247 and lysine 260 contribute to the ATP site; that span reads IGEGEFGAV. The Proton acceptor role is filled by aspartate 350. Residues 483-505 form a disordered region; sequence VGVSAPAGGQEAEGSAPTRSQDP.

This sequence belongs to the protein kinase superfamily. Tyr protein kinase family. CSK subfamily. As to quaternary structure, interacts with KIT. As to expression, most abundant in brain, and to a lesser extent in the spleen, the thymus and the liver. Also found in the T-cell lineage.

The protein resides in the cytoplasm. The protein localises to the membrane. It carries out the reaction L-tyrosyl-[protein] + ATP = O-phospho-L-tyrosyl-[protein] + ADP + H(+). Its function is as follows. Could play a significant role in the signal transduction of hematopoietic cells. May regulate tyrosine kinase activity of SRC-family members in brain by specifically phosphorylating their C-terminal regulatory tyrosine residue which acts as a negative regulatory site. It may play an inhibitory role in the control of T-cell proliferation. This chain is Megakaryocyte-associated tyrosine-protein kinase (Matk), found in Mus musculus (Mouse).